Here is a 319-residue protein sequence, read N- to C-terminus: Beta-ketoacyl-[acyl-carrier-protein] synthase III (319 aa).

Active-site residues include Cys113 and His246. An ACP-binding region spans residues 247 to 251 (QANLR). Asn276 is an active-site residue.

The protein belongs to the thiolase-like superfamily. FabH family. As to quaternary structure, homodimer.

The protein resides in the cytoplasm. It catalyses the reaction malonyl-[ACP] + acetyl-CoA + H(+) = 3-oxobutanoyl-[ACP] + CO2 + CoA. The protein operates within lipid metabolism; fatty acid biosynthesis. Functionally, catalyzes the condensation reaction of fatty acid synthesis by the addition to an acyl acceptor of two carbons from malonyl-ACP. Catalyzes the first condensation reaction which initiates fatty acid synthesis and may therefore play a role in governing the total rate of fatty acid production. Possesses both acetoacetyl-ACP synthase and acetyl transacylase activities. Its substrate specificity determines the biosynthesis of branched-chain and/or straight-chain of fatty acids. The polypeptide is Beta-ketoacyl-[acyl-carrier-protein] synthase III (Chromobacterium violaceum (strain ATCC 12472 / DSM 30191 / JCM 1249 / CCUG 213 / NBRC 12614 / NCIMB 9131 / NCTC 9757 / MK)).